The chain runs to 105 residues: Large ribosomal subunit protein eL36 (105 aa).

Belongs to the eukaryotic ribosomal protein eL36 family. In terms of assembly, component of the large ribosomal subunit.

The protein resides in the cytoplasm. It localises to the cytosol. Component of the large ribosomal subunit. The ribosome is a large ribonucleoprotein complex responsible for the synthesis of proteins in the cell. The protein is Large ribosomal subunit protein eL36 (rpl36) of Xenopus laevis (African clawed frog).